Reading from the N-terminus, the 98-residue chain is MMKSVVLVILGLTLLLETQAMPSSRLSCYRKLLKDRNCHNLPEGRADLKLIDANVQHHFWDGKGCEMICYCNFSELLCCPKDVFFGPKISFVIPCNNH.

The N-terminal stretch at 1–20 (MMKSVVLVILGLTLLLETQA) is a signal peptide. A glycan (N-linked (GlcNAc...) asparagine) is linked at Asn72.

It belongs to the SCRG1 family.

The protein resides in the secreted. This is Scrapie-responsive protein 1 (Scrg1) from Mus musculus (Mouse).